Reading from the N-terminus, the 290-residue chain is 2-dehydro-3-deoxyphosphooctonate aldolase 1 (290 aa).

An N-acetylalanine modification is found at A2.

This sequence belongs to the KdsA family. Expressed in shoots.

The protein resides in the cytoplasm. The enzyme catalyses D-arabinose 5-phosphate + phosphoenolpyruvate + H2O = 3-deoxy-alpha-D-manno-2-octulosonate-8-phosphate + phosphate. In terms of biological role, catalyzes the stereospecific condensation of D-arabinose 5-phosphate and phosphoenolpyruvate to form 3-deoxy-D-manno-octulosonate 8-phosphate (KDO-8-phosphate) and inorganic phosphate. Involved in the biosynthesis of 3-deoxy-D-manno-octulosonate (KDO) which is an indispensable component of rhamnogalacturonan II (RG-II), a structurally complex pectic polysaccharide of the primary cell wall. RG-II is essential for the cell wall integrity of rapidly growing tissues and pollen tube growth and elongation. The sequence is that of 2-dehydro-3-deoxyphosphooctonate aldolase 1 (KDSA1) from Arabidopsis thaliana (Mouse-ear cress).